The sequence spans 193 residues: Peptidyl-tRNA hydrolase (193 aa).

Tyr-17 contacts tRNA. His-22 (proton acceptor) is an active-site residue. 3 residues coordinate tRNA: Tyr-68, Asn-70, and Asn-116.

This sequence belongs to the PTH family. In terms of assembly, monomer.

Its subcellular location is the cytoplasm. It catalyses the reaction an N-acyl-L-alpha-aminoacyl-tRNA + H2O = an N-acyl-L-amino acid + a tRNA + H(+). Its function is as follows. Hydrolyzes ribosome-free peptidyl-tRNAs (with 1 or more amino acids incorporated), which drop off the ribosome during protein synthesis, or as a result of ribosome stalling. In terms of biological role, catalyzes the release of premature peptidyl moieties from peptidyl-tRNA molecules trapped in stalled 50S ribosomal subunits, and thus maintains levels of free tRNAs and 50S ribosomes. In Acinetobacter baumannii (strain AB307-0294), this protein is Peptidyl-tRNA hydrolase.